We begin with the raw amino-acid sequence, 188 residues long: Defensin-like protein 99 (188 aa).

A signal peptide spans 1-28 (MGSLKLSTVVVTALVVCLSILLISPTEA). 7 disulfides stabilise this stretch: cysteine 37–cysteine 95, cysteine 45–cysteine 77, cysteine 58–cysteine 92, cysteine 62–cysteine 94, cysteine 123–cysteine 178, cysteine 137–cysteine 175, and cysteine 141–cysteine 177.

This sequence belongs to the DEFL family.

It is found in the secreted. This Arabidopsis thaliana (Mouse-ear cress) protein is Defensin-like protein 99.